Here is a 149-residue protein sequence, read N- to C-terminus: 3-dehydroquinate dehydratase (149 aa).

The active-site Proton acceptor is Tyr-22. Asn-74, His-80, and Asp-87 together coordinate substrate. The Proton donor role is filled by His-100. Substrate-binding positions include 101–102 (MS) and Arg-111.

Belongs to the type-II 3-dehydroquinase family. As to quaternary structure, homododecamer.

It catalyses the reaction 3-dehydroquinate = 3-dehydroshikimate + H2O. It functions in the pathway metabolic intermediate biosynthesis; chorismate biosynthesis; chorismate from D-erythrose 4-phosphate and phosphoenolpyruvate: step 3/7. In terms of biological role, catalyzes a trans-dehydration via an enolate intermediate. In Leptothrix cholodnii (strain ATCC 51168 / LMG 8142 / SP-6) (Leptothrix discophora (strain SP-6)), this protein is 3-dehydroquinate dehydratase.